We begin with the raw amino-acid sequence, 257 residues long: Small ribosomal subunit protein eS1 (257 aa).

The segment at 236–257 (TSAEGEKIERPDDYEPPVQESV) is disordered. Positions 239 to 248 (EGEKIERPDD) are enriched in basic and acidic residues.

It belongs to the eukaryotic ribosomal protein eS1 family. In terms of assembly, component of the small ribosomal subunit. Mature ribosomes consist of a small (40S) and a large (60S) subunit. The 40S subunit contains about 33 different proteins and 1 molecule of RNA (18S). The 60S subunit contains about 49 different proteins and 3 molecules of RNA (28S, 5.8S and 5S).

Its subcellular location is the cytoplasm. The sequence is that of Small ribosomal subunit protein eS1 from Brugia malayi (Filarial nematode worm).